The chain runs to 559 residues: Poly(3-hydroxyalkanoate) polymerase 1 (559 aa).

The active site involves Cys-296.

Belongs to the PHA/PHB synthase family. Type II PhaC subfamily.

Its pathway is biopolymer metabolism; poly-(R)-3-hydroxybutanoate biosynthesis. Functionally, synthesizes poly(3-hydroxyalkanoates) (PHA), complements a mutant of P.putida that does not make PHA. In Ectopseudomonas oleovorans (Pseudomonas oleovorans), this protein is Poly(3-hydroxyalkanoate) polymerase 1.